Here is a 158-residue protein sequence, read N- to C-terminus: Protein-export protein SecB (158 aa).

The protein belongs to the SecB family. In terms of assembly, homotetramer, a dimer of dimers. One homotetramer interacts with 1 SecA dimer.

Its subcellular location is the cytoplasm. In terms of biological role, one of the proteins required for the normal export of preproteins out of the cell cytoplasm. It is a molecular chaperone that binds to a subset of precursor proteins, maintaining them in a translocation-competent state. It also specifically binds to its receptor SecA. The polypeptide is Protein-export protein SecB (Rhodopseudomonas palustris (strain HaA2)).